The following is a 357-amino-acid chain: D-alanine--D-alanine ligase (357 aa).

An ATP-grasp domain is found at 134-339; that stretch reads KQLFEHRGLP…YPDLIAKLID (206 aa). 167–222 provides a ligand contact to ATP; that stretch reads NDKLTYPVFVKPANLGSSVGISKCNNEEELKSGIAEAFQFDRKLVIEQGINAREIE. The Mg(2+) site is built by D293, E306, and N308.

The protein belongs to the D-alanine--D-alanine ligase family. It depends on Mg(2+) as a cofactor. Mn(2+) is required as a cofactor.

The protein resides in the cytoplasm. It catalyses the reaction 2 D-alanine + ATP = D-alanyl-D-alanine + ADP + phosphate + H(+). The protein operates within cell wall biogenesis; peptidoglycan biosynthesis. In terms of biological role, cell wall formation. The polypeptide is D-alanine--D-alanine ligase (Staphylococcus epidermidis (strain ATCC 35984 / DSM 28319 / BCRC 17069 / CCUG 31568 / BM 3577 / RP62A)).